Reading from the N-terminus, the 600-residue chain is Elongation factor 4 (600 aa).

Positions 4–186 (DTIRNFSIIA…EIVKKIPPPE (183 aa)) constitute a tr-type G domain. GTP-binding positions include 16-21 (DHGKST) and 133-136 (NKID).

The protein belongs to the TRAFAC class translation factor GTPase superfamily. Classic translation factor GTPase family. LepA subfamily.

The protein resides in the cell inner membrane. The catalysed reaction is GTP + H2O = GDP + phosphate + H(+). Functionally, required for accurate and efficient protein synthesis under certain stress conditions. May act as a fidelity factor of the translation reaction, by catalyzing a one-codon backward translocation of tRNAs on improperly translocated ribosomes. Back-translocation proceeds from a post-translocation (POST) complex to a pre-translocation (PRE) complex, thus giving elongation factor G a second chance to translocate the tRNAs correctly. Binds to ribosomes in a GTP-dependent manner. In Geobacter sulfurreducens (strain ATCC 51573 / DSM 12127 / PCA), this protein is Elongation factor 4.